Here is a 132-residue protein sequence, read N- to C-terminus: UPF0299 membrane protein KPN78578_25390 (132 aa).

4 helical membrane-spanning segments follow: residues 5-25, 38-60, 66-86, and 93-113; these read LTII…LYAG, GSII…PQWV, ILIR…MQYW, and LGPV…VVSW.

It belongs to the UPF0299 family.

It localises to the cell inner membrane. The protein is UPF0299 membrane protein KPN78578_25390 of Klebsiella pneumoniae subsp. pneumoniae (strain ATCC 700721 / MGH 78578).